Reading from the N-terminus, the 116-residue chain is Large ribosomal subunit protein bL17 (116 aa).

It belongs to the bacterial ribosomal protein bL17 family. In terms of assembly, part of the 50S ribosomal subunit. Contacts protein L32.

This chain is Large ribosomal subunit protein bL17, found in Synechococcus sp. (strain JA-3-3Ab) (Cyanobacteria bacterium Yellowstone A-Prime).